A 78-amino-acid chain; its full sequence is Small ribosomal subunit protein bS20 (78 aa).

Belongs to the bacterial ribosomal protein bS20 family.

Binds directly to 16S ribosomal RNA. The polypeptide is Small ribosomal subunit protein bS20 (Streptococcus thermophilus (strain ATCC BAA-491 / LMD-9)).